A 446-amino-acid chain; its full sequence is MELLLSGCEAIEGEPSNVLCHNLHTGTLVSTFRQSSPAKNATCTTLNHLLSAQHTRPQLNIHNFGKEILDQSIILPEILICVQSSPCGSWLAAGTEKGNLYIWSLKSGALIYFFRAHYQPLTILKFSNDGMVLFTASNDGDVFAWLISTLVDQNSTFETSNSSVKAISHFSGHKRSIVSMEIGPGPIVSGRLYTASEDNTIRIWDVSTGNLLTTIALPSTPSCMTVDPSERVVYVGNEKGIIWIPLYTGSSTFSNNVKEKKRVTSVDNTTIPNAIGGMGRVVDYNDSRESSIISCQSPITTLTVSFDASLLISGDKDGNVLVWDSVSRQVLRRLVQYYSPVSFLQCKVDKISFYSNSSLSFPVLKRMITNEYLNSDVRICIQDDGVEQLMQPENILKISSDIVTQGSESSWRAKAETSEMQLKEAKRLFYELKQIHQALWEKYLQK.

5 WD repeats span residues 74–113 (ILPEILICVQSSPCGSWLAAGTEKGNLYIWSLKSGALIYF), 116–155 (AHYQPLTILKFSNDGMVLFTASNDGDVFAWLISTLVDQNS), 172–214 (GHKR…LLTT), 216–257 (ALPS…SNNV), and 294–333 (SCQSPITTLTVSFDASLLISGDKDGNVLVWDSVSRQVLRR).

The protein belongs to the WD repeat IPI3/WDR18 family. Component of the RIX1 complex, composed of ipi1, rix1/ipi2 and crb3/ipi3 in a 1:2:2 stoichiometry. The complex interacts (via rix1) with mdn1 (via its hexameric AAA ATPase ring) and the pre-60S ribosome particles. Interacts with rix1, gcr3 and Las1.

The protein localises to the nucleus. It is found in the chromosome. In terms of biological role, required for both pre-rRNA processing and heterochromatic gene silencing. Component of the RIX1 complex required for processing of ITS2 sequences from 35S pre-rRNA. This chain is Pre-rRNA-processing protein crb3/ipi3 (crb3), found in Schizosaccharomyces pombe (strain 972 / ATCC 24843) (Fission yeast).